A 319-amino-acid chain; its full sequence is Transaldolase (319 aa).

Lysine 125 (schiff-base intermediate with substrate) is an active-site residue.

This sequence belongs to the transaldolase family. Type 1 subfamily. As to quaternary structure, homodimer.

The protein localises to the cytoplasm. It carries out the reaction D-sedoheptulose 7-phosphate + D-glyceraldehyde 3-phosphate = D-erythrose 4-phosphate + beta-D-fructose 6-phosphate. It functions in the pathway carbohydrate degradation; pentose phosphate pathway; D-glyceraldehyde 3-phosphate and beta-D-fructose 6-phosphate from D-ribose 5-phosphate and D-xylulose 5-phosphate (non-oxidative stage): step 2/3. In terms of biological role, transaldolase is important for the balance of metabolites in the pentose-phosphate pathway. In Ralstonia nicotianae (strain ATCC BAA-1114 / GMI1000) (Ralstonia solanacearum), this protein is Transaldolase.